The following is a 200-amino-acid chain: Imidazole glycerol phosphate synthase subunit HisH (200 aa).

Residues 2–200 (KVAIVEYGVG…LGEVLTGASR (199 aa)) enclose the Glutamine amidotransferase type-1 domain. The Nucleophile role is filled by C79. Active-site residues include H179 and E181.

As to quaternary structure, heterodimer of HisH and HisF.

Its subcellular location is the cytoplasm. It catalyses the reaction 5-[(5-phospho-1-deoxy-D-ribulos-1-ylimino)methylamino]-1-(5-phospho-beta-D-ribosyl)imidazole-4-carboxamide + L-glutamine = D-erythro-1-(imidazol-4-yl)glycerol 3-phosphate + 5-amino-1-(5-phospho-beta-D-ribosyl)imidazole-4-carboxamide + L-glutamate + H(+). It carries out the reaction L-glutamine + H2O = L-glutamate + NH4(+). It functions in the pathway amino-acid biosynthesis; L-histidine biosynthesis; L-histidine from 5-phospho-alpha-D-ribose 1-diphosphate: step 5/9. In terms of biological role, IGPS catalyzes the conversion of PRFAR and glutamine to IGP, AICAR and glutamate. The HisH subunit catalyzes the hydrolysis of glutamine to glutamate and ammonia as part of the synthesis of IGP and AICAR. The resulting ammonia molecule is channeled to the active site of HisF. This Methanopyrus kandleri (strain AV19 / DSM 6324 / JCM 9639 / NBRC 100938) protein is Imidazole glycerol phosphate synthase subunit HisH.